A 196-amino-acid chain; its full sequence is Putative 3-methyladenine DNA glycosylase (196 aa).

This sequence belongs to the DNA glycosylase MPG family.

This Chlamydia pneumoniae (Chlamydophila pneumoniae) protein is Putative 3-methyladenine DNA glycosylase.